Here is a 78-residue protein sequence, read N- to C-terminus: Cell division topological specificity factor (78 aa).

This sequence belongs to the MinE family.

Prevents the cell division inhibition by proteins MinC and MinD at internal division sites while permitting inhibition at polar sites. This ensures cell division at the proper site by restricting the formation of a division septum at the midpoint of the long axis of the cell. The chain is Cell division topological specificity factor from Helicobacter hepaticus (strain ATCC 51449 / 3B1).